The following is a 698-amino-acid chain: Elongation factor G 1 (698 aa).

Positions 8–290 constitute a tr-type G domain; it reads ERYRNIGIVA…AVVDYLPAPI (283 aa). GTP contacts are provided by residues 17 to 24, 88 to 92, and 142 to 145; these read AHVDAGKT, DTPGH, and NKMD.

The protein belongs to the TRAFAC class translation factor GTPase superfamily. Classic translation factor GTPase family. EF-G/EF-2 subfamily.

Its subcellular location is the cytoplasm. Catalyzes the GTP-dependent ribosomal translocation step during translation elongation. During this step, the ribosome changes from the pre-translocational (PRE) to the post-translocational (POST) state as the newly formed A-site-bound peptidyl-tRNA and P-site-bound deacylated tRNA move to the P and E sites, respectively. Catalyzes the coordinated movement of the two tRNA molecules, the mRNA and conformational changes in the ribosome. In Shewanella denitrificans (strain OS217 / ATCC BAA-1090 / DSM 15013), this protein is Elongation factor G 1.